A 150-amino-acid chain; its full sequence is Oleosin Ara h 10.0102 (150 aa).

2 helical membrane-spanning segments follow: residues Val-39 to Ala-59 and Leu-73 to Ala-93.

This sequence belongs to the oleosin family. In terms of tissue distribution, expressed in seeds (at protein level).

It localises to the lipid droplet. The protein resides in the membrane. In terms of biological role, may have a structural role to stabilize the lipid body during desiccation of the seed by preventing coalescence of the oil. Probably interacts with both lipid and phospholipid moieties of lipid bodies. May also provide recognition signals for specific lipase anchorage in lipolysis during seedling growth. The protein is Oleosin Ara h 10.0102 of Arachis hypogaea (Peanut).